A 226-amino-acid chain; its full sequence is Cytochrome c oxidase subunit 2 (226 aa).

At 1–25 (MNTWLLSLQNSNSPTYDMMIFFHDF) the chain is on the mitochondrial intermembrane side. A helical transmembrane segment spans residues 26-47 (TMMILIFITLLILFIMFTMINN). At 48 to 61 (NLINRFLLQGHFIE) the chain is on the mitochondrial matrix side. Residues 62 to 81 (LIWTITPMIILILIAIPSFK) form a helical membrane-spanning segment. Residues 82–226 (ILYLTDEMFN…YFKNWLKSFL (145 aa)) lie on the Mitochondrial intermembrane side of the membrane. Cu cation contacts are provided by histidine 160, cysteine 195, glutamate 197, cysteine 199, histidine 203, and methionine 206. Glutamate 197 serves as a coordination point for Mg(2+).

This sequence belongs to the cytochrome c oxidase subunit 2 family. Component of the cytochrome c oxidase (complex IV, CIV), a multisubunit enzyme composed of a catalytic core of 3 subunits and several supernumerary subunits. The complex exists as a monomer or a dimer and forms supercomplexes (SCs) in the inner mitochondrial membrane with ubiquinol-cytochrome c oxidoreductase (cytochrome b-c1 complex, complex III, CIII). Cu cation is required as a cofactor.

It localises to the mitochondrion inner membrane. It catalyses the reaction 4 Fe(II)-[cytochrome c] + O2 + 8 H(+)(in) = 4 Fe(III)-[cytochrome c] + 2 H2O + 4 H(+)(out). Functionally, component of the cytochrome c oxidase, the last enzyme in the mitochondrial electron transport chain which drives oxidative phosphorylation. The respiratory chain contains 3 multisubunit complexes succinate dehydrogenase (complex II, CII), ubiquinol-cytochrome c oxidoreductase (cytochrome b-c1 complex, complex III, CIII) and cytochrome c oxidase (complex IV, CIV), that cooperate to transfer electrons derived from NADH and succinate to molecular oxygen, creating an electrochemical gradient over the inner membrane that drives transmembrane transport and the ATP synthase. Cytochrome c oxidase is the component of the respiratory chain that catalyzes the reduction of oxygen to water. Electrons originating from reduced cytochrome c in the intermembrane space (IMS) are transferred via the dinuclear copper A center (CU(A)) of subunit 2 and heme A of subunit 1 to the active site in subunit 1, a binuclear center (BNC) formed by heme A3 and copper B (CU(B)). The BNC reduces molecular oxygen to 2 water molecules using 4 electrons from cytochrome c in the IMS and 4 protons from the mitochondrial matrix. The chain is Cytochrome c oxidase subunit 2 (COII) from Lasius sp.